Consider the following 375-residue polypeptide: Sulfite efflux pump SSU1 (375 aa).

Residues 1-25 (MPSGSGFHNIEEAGEKARKRDDWIA) are Cytoplasmic-facing. A helical transmembrane segment spans residues 26-46 (ISNFHPGWFSVNMGTGITAIL). Residues 47 to 59 (LQNLPYQFPGLHY) are Extracellular-facing. A helical membrane pass occupies residues 60–80 (IAVILFILNVIIFFLFLTISI). Over 81 to 101 (TRYCLWPDKFKAMLAHPAHSM) the chain is Cytoplasmic. A helical transmembrane segment spans residues 102-122 (LLGTFPMGFATIINCIVFICV). Residues 123–135 (PVWGEWASRFAWG) are Extracellular-facing. A helical transmembrane segment spans residues 136 to 156 (LWWIDAAVSVAICYFVPFMLM). Residues 157–167 (TKHTSSLETMT) are Cytoplasmic-facing. The chain crosses the membrane as a helical span at residues 168 to 188 (AAWLLPIVAPVVAAASGGVVA). At 189–200 (DSLQNDTHALIT) the chain is on the extracellular side. The N-linked (GlcNAc...) asparagine glycan is linked to Asn-193. Residues 201 to 221 (ILVCYVMWGSAVPLAMVILVI) form a helical membrane-spanning segment. Topologically, residues 222–234 (YFQRLAIHKLVPR) are cytoplasmic. The chain crosses the membrane as a helical span at residues 235 to 255 (AAIVSALLPIGPLGQGGFGLM). The Extracellular segment spans residues 256 to 277 (QLGVVAKRVFPRLDFLAPIAGD). Residues 278–298 (IFYVMGAFIAMIMWGFGLIWL) traverse the membrane as a helical segment. Topologically, residues 299–309 (WFALASFTRGK) are cytoplasmic. The helical transmembrane segment at 310 to 330 (FYFNIGWWAFTFPLGVFTTAT) threads the bilayer. At 331–343 (TQMGKEFNSPFFD) the chain is on the extracellular side. A helical membrane pass occupies residues 344–364 (ILGTFFSIVVTCMWVLVFALT). Topologically, residues 365-375 (VYKSCTKELFR) are cytoplasmic.

The protein belongs to the tellurite-resistance/dicarboxylate transporter (TDT) family.

It localises to the cell membrane. In terms of biological role, sulphite efflux pump required for the secretion of sulphite as a reducing agent. In the presence of sulphite, cystine in keratin is directly cleaved to cysteine and S-sulphocysteine, and thereby, reduced proteins become accessible to hydrolysis by a variety of secreted endo- and exoproteases. Excretion of sulphite mediated by an efflux pump also represents a detoxification pathway for dermatophytes during infection of the epidermal stratum corneum, hair and nails, which are rich in cysteine. This chain is Sulfite efflux pump SSU1, found in Arthroderma benhamiae (strain ATCC MYA-4681 / CBS 112371) (Trichophyton mentagrophytes).